We begin with the raw amino-acid sequence, 242 residues long: Proteasome subunit alpha (242 aa).

Belongs to the peptidase T1A family. The 20S proteasome core is composed of 14 alpha and 14 beta subunits that assemble into four stacked heptameric rings, resulting in a barrel-shaped structure. The two inner rings, each composed of seven catalytic beta subunits, are sandwiched by two outer rings, each composed of seven alpha subunits. The catalytic chamber with the active sites is on the inside of the barrel. Has a gated structure, the ends of the cylinder being occluded by the N-termini of the alpha-subunits. Is capped at one or both ends by the proteasome regulatory ATPase, PAN.

The protein resides in the cytoplasm. With respect to regulation, the formation of the proteasomal ATPase PAN-20S proteasome complex, via the docking of the C-termini of PAN into the intersubunit pockets in the alpha-rings, triggers opening of the gate for substrate entry. Interconversion between the open-gate and close-gate conformations leads to a dynamic regulation of the 20S proteasome proteolysis activity. Functionally, component of the proteasome core, a large protease complex with broad specificity involved in protein degradation. The chain is Proteasome subunit alpha from Sulfurisphaera tokodaii (strain DSM 16993 / JCM 10545 / NBRC 100140 / 7) (Sulfolobus tokodaii).